The sequence spans 153 residues: Large ribosomal subunit protein uL30 (153 aa).

This sequence belongs to the universal ribosomal protein uL30 family. As to quaternary structure, part of the 50S ribosomal subunit.

This is Large ribosomal subunit protein uL30 from Methanocorpusculum labreanum (strain ATCC 43576 / DSM 4855 / Z).